The following is a 283-amino-acid chain: Acetyl-coenzyme A carboxylase carboxyl transferase subunit beta (283 aa).

The 261-residue stretch at 23 to 283 (LWIKCPSCSE…DFLMAGKAAA (261 aa)) folds into the CoA carboxyltransferase N-terminal domain. The Zn(2+) site is built by cysteine 27, cysteine 30, cysteine 46, and cysteine 49. The segment at 27–49 (CPSCSEMLFTKEYEDNLSVCPHC) adopts a C4-type zinc-finger fold.

This sequence belongs to the AccD/PCCB family. In terms of assembly, acetyl-CoA carboxylase is a heterohexamer composed of biotin carboxyl carrier protein (AccB), biotin carboxylase (AccC) and two subunits each of ACCase subunit alpha (AccA) and ACCase subunit beta (AccD). Requires Zn(2+) as cofactor.

It localises to the cytoplasm. The enzyme catalyses N(6)-carboxybiotinyl-L-lysyl-[protein] + acetyl-CoA = N(6)-biotinyl-L-lysyl-[protein] + malonyl-CoA. The protein operates within lipid metabolism; malonyl-CoA biosynthesis; malonyl-CoA from acetyl-CoA: step 1/1. Component of the acetyl coenzyme A carboxylase (ACC) complex. Biotin carboxylase (BC) catalyzes the carboxylation of biotin on its carrier protein (BCCP) and then the CO(2) group is transferred by the transcarboxylase to acetyl-CoA to form malonyl-CoA. This chain is Acetyl-coenzyme A carboxylase carboxyl transferase subunit beta, found in Novosphingobium aromaticivorans (strain ATCC 700278 / DSM 12444 / CCUG 56034 / CIP 105152 / NBRC 16084 / F199).